The primary structure comprises 628 residues: E3 SUMO-protein ligase PIAS3 (628 aa).

An interaction with CCAR2 region spans residues 1–200 (MAELGELKHM…QLRFCLCETS (200 aa)). Positions 11-45 (VMSFRVSELQVLLGFAGRNKSGRKHELLAKALHLL) constitute an SAP domain. An LXXLL motif motif is present at residues 19 to 23 (LQVLL). Glycyl lysine isopeptide (Lys-Gly) (interchain with G-Cter in SUMO2) cross-links involve residues lysine 46 and lysine 56. The disordered stretch occupies residues 72–95 (PSDLSLLSLPPGTSPVGSPSPLAS). A PINIT domain is found at 115–280 (MHPPLPQPVH…SLSVYLVRQL (166 aa)). Residues lysine 230 and lysine 307 each participate in a glycyl lysine isopeptide (Lys-Gly) (interchain with G-Cter in SUMO2) cross-link. The SP-RING-type zinc-finger motif lies at 312–393 (PDSEVATTSL…FMEILNSCSD (82 aa)). Residues cysteine 343, histidine 345, cysteine 366, and cysteine 369 each contribute to the Zn(2+) site. An SUMO1-binding region spans residues 450–460 (LTIESSSDEED). Residues lysine 466 and lysine 482 each participate in a glycyl lysine isopeptide (Lys-Gly) (interchain with G-Cter in SUMO2) cross-link. The segment at 573 to 618 (LAPTLGSSHRSATPAPAPGRVSSIVAPGSSLREGHGGPLPSGPSLT) is disordered.

This sequence belongs to the PIAS family. Binds SUMO1 and UBE2I. Interacts with AR, BCL11A, GFI1, HMGA2, IRF1, MITF, NCOA2, as well as with STAT3, after treatment with IL6, CNTF or OSM and with STAT5, after PRL stimulation. Interacts with PLAG1. Interacts with ZFHX3. Interacts with MTA1. Interacts with CCAR2 (via N-terminus). Interacts with TRIM8. Interacts with PRDM1. Post-translationally, sumoylated. In terms of tissue distribution, widely expressed, with highest levels in lung, kidney and spleen.

The protein resides in the cytoplasm. Its subcellular location is the nucleus. The protein localises to the nucleus speckle. The protein operates within protein modification; protein sumoylation. Its function is as follows. Functions as an E3-type small ubiquitin-like modifier (SUMO) ligase, stabilizing the interaction between UBE2I and the substrate, and as a SUMO-tethering factor. Plays a crucial role as a transcriptional coregulation in various cellular pathways, including the STAT pathway and the steroid hormone signaling pathway. The effects of this transcriptional coregulation, transactivation or silencing, may vary depending upon the biological context. Enhances the sumoylation of MTA1 and may participate in its paralog-selective sumoylation. Sumoylates CCAR2 which promotes its interaction with SIRT1. Diminishes the sumoylation of ZFHX3 by preventing the colocalization of ZFHX3 with SUMO1 in the nucleus. This is E3 SUMO-protein ligase PIAS3 (Pias3) from Rattus norvegicus (Rat).